Here is a 494-residue protein sequence, read N- to C-terminus: uncharacterized protein (494 aa).

Belongs to the TPP enzyme family.

This is an uncharacterized protein from Methanocaldococcus jannaschii (strain ATCC 43067 / DSM 2661 / JAL-1 / JCM 10045 / NBRC 100440) (Methanococcus jannaschii).